A 199-amino-acid polypeptide reads, in one-letter code: Probable chemoreceptor glutamine deamidase CheD (199 aa).

This sequence belongs to the CheD family.

It carries out the reaction L-glutaminyl-[protein] + H2O = L-glutamyl-[protein] + NH4(+). Functionally, probably deamidates glutamine residues to glutamate on methyl-accepting chemotaxis receptors (MCPs), playing an important role in chemotaxis. The chain is Probable chemoreceptor glutamine deamidase CheD from Nitratidesulfovibrio vulgaris (strain ATCC 29579 / DSM 644 / CCUG 34227 / NCIMB 8303 / VKM B-1760 / Hildenborough) (Desulfovibrio vulgaris).